A 156-amino-acid polypeptide reads, in one-letter code: Small ribosomal subunit protein uS7 (156 aa).

This sequence belongs to the universal ribosomal protein uS7 family. Part of the 30S ribosomal subunit. Contacts proteins S9 and S11.

Its function is as follows. One of the primary rRNA binding proteins, it binds directly to 16S rRNA where it nucleates assembly of the head domain of the 30S subunit. Is located at the subunit interface close to the decoding center, probably blocks exit of the E-site tRNA. This is Small ribosomal subunit protein uS7 from Frankia casuarinae (strain DSM 45818 / CECT 9043 / HFP020203 / CcI3).